We begin with the raw amino-acid sequence, 245 residues long: Nodulation protein G (245 aa).

Position 11-35 (11-35) interacts with NAD(+); the sequence is VTGASGGIGEAIARVLHAQGAIVGL. Serine 139 provides a ligand contact to substrate. The active-site Proton acceptor is the tyrosine 152.

Belongs to the short-chain dehydrogenases/reductases (SDR) family.

Functionally, proposed to modify Nod factor fatty acyl chain. This is Nodulation protein G (nodG) from Rhizobium sp. (strain N33).